The following is a 395-amino-acid chain: uncharacterized protein (395 aa).

This is an uncharacterized protein from Escherichia coli (strain K12).